Here is a 1611-residue protein sequence, read N- to C-terminus: Pentafunctional AROM polypeptide (1611 aa).

Positions 1–391 (MSSSSADVLK…YEEKASVVAD (391 aa)) are 3-dehydroquinate synthase. NAD(+) is bound by residues 47-49 (DTN), 84-87 (EGAK), 115-117 (GGV), and D120. R131 lines the 7-phospho-2-dehydro-3-deoxy-D-arabino-heptonate pocket. Position 140–141 (140–141 (TT)) interacts with NAD(+). D147 and K153 together coordinate 7-phospho-2-dehydro-3-deoxy-D-arabino-heptonate. Residue K162 coordinates NAD(+). N163 serves as a coordination point for 7-phospho-2-dehydro-3-deoxy-D-arabino-heptonate. NAD(+) is bound by residues 180 to 183 (FLTT) and N191. E195 contacts Zn(2+). Residues 195–198 (EVIK) and K257 contribute to the 7-phospho-2-dehydro-3-deoxy-D-arabino-heptonate site. The active-site Proton acceptor; for 3-dehydroquinate synthase activity is the E267. 7-phospho-2-dehydro-3-deoxy-D-arabino-heptonate is bound by residues 271–275 (RNLVN) and H278. H278 contacts Zn(2+). Residue H282 is the Proton acceptor; for 3-dehydroquinate synthase activity of the active site. Residues H294 and K363 each coordinate 7-phospho-2-dehydro-3-deoxy-D-arabino-heptonate. Residue H294 coordinates Zn(2+). The segment at 404–863 (VKAATPTKSP…WDDLQNKIGV (460 aa)) is EPSP synthase. Catalysis depends on C845, which acts as the For EPSP synthase activity. The shikimate kinase stretch occupies residues 892 to 1093 (DRPIFLIGMR…SVGNPTSFLS (202 aa)). Residue 899-906 (GMRGAGKT) participates in ATP binding. The interval 1094–1318 (LTFPDVTPAL…AAPGQLTARE (225 aa)) is 3-dehydroquinase. Catalysis depends on H1220, which acts as the Proton acceptor; for 3-dehydroquinate dehydratase activity. The active-site Schiff-base intermediate with substrate; for 3-dehydroquinate dehydratase activity is K1248. The interval 1331–1611 (AKKFVLFGSP…RKAVLDKYFA (281 aa)) is shikimate dehydrogenase.

It in the N-terminal section; belongs to the sugar phosphate cyclases superfamily. Dehydroquinate synthase family. This sequence in the 2nd section; belongs to the EPSP synthase family. In the 3rd section; belongs to the shikimate kinase family. The protein in the 4th section; belongs to the type-I 3-dehydroquinase family. It in the C-terminal section; belongs to the shikimate dehydrogenase family. Homodimer. The cofactor is Zn(2+).

The protein localises to the cytoplasm. The catalysed reaction is 7-phospho-2-dehydro-3-deoxy-D-arabino-heptonate = 3-dehydroquinate + phosphate. It catalyses the reaction 3-dehydroquinate = 3-dehydroshikimate + H2O. The enzyme catalyses shikimate + NADP(+) = 3-dehydroshikimate + NADPH + H(+). It carries out the reaction shikimate + ATP = 3-phosphoshikimate + ADP + H(+). The catalysed reaction is 3-phosphoshikimate + phosphoenolpyruvate = 5-O-(1-carboxyvinyl)-3-phosphoshikimate + phosphate. Its pathway is metabolic intermediate biosynthesis; chorismate biosynthesis; chorismate from D-erythrose 4-phosphate and phosphoenolpyruvate: step 2/7. It functions in the pathway metabolic intermediate biosynthesis; chorismate biosynthesis; chorismate from D-erythrose 4-phosphate and phosphoenolpyruvate: step 3/7. The protein operates within metabolic intermediate biosynthesis; chorismate biosynthesis; chorismate from D-erythrose 4-phosphate and phosphoenolpyruvate: step 4/7. It participates in metabolic intermediate biosynthesis; chorismate biosynthesis; chorismate from D-erythrose 4-phosphate and phosphoenolpyruvate: step 5/7. Its pathway is metabolic intermediate biosynthesis; chorismate biosynthesis; chorismate from D-erythrose 4-phosphate and phosphoenolpyruvate: step 6/7. The AROM polypeptide catalyzes 5 consecutive enzymatic reactions in prechorismate polyaromatic amino acid biosynthesis. This Cryptococcus neoformans var. neoformans serotype D (strain B-3501A) (Filobasidiella neoformans) protein is Pentafunctional AROM polypeptide.